The following is a 27-amino-acid chain: Toxin Bcg III 21.00 (27 aa).

It is found in the secreted. It localises to the nematocyst. Functionally, possible voltage-gated potassium channel (Kv) blocker. This is Toxin Bcg III 21.00 from Bunodosoma cangicum (Sea anemone).